The sequence spans 140 residues: Phosphopantetheine adenylyltransferase (140 aa).

Substrate is bound at residue Ser9. Residues 9-10 (SF) and His17 contribute to the ATP site. Substrate is bound by residues Lys41, Thr74, and Arg88. Residues 89–91 (GLR), Glu99, and 124–130 (KRSLSST) each bind ATP.

Belongs to the bacterial CoaD family. As to quaternary structure, homohexamer. Mg(2+) serves as cofactor.

It localises to the cytoplasm. The catalysed reaction is (R)-4'-phosphopantetheine + ATP + H(+) = 3'-dephospho-CoA + diphosphate. It participates in cofactor biosynthesis; coenzyme A biosynthesis; CoA from (R)-pantothenate: step 4/5. Reversibly transfers an adenylyl group from ATP to 4'-phosphopantetheine, yielding dephospho-CoA (dPCoA) and pyrophosphate. This is Phosphopantetheine adenylyltransferase from Mycoplasma capricolum subsp. capricolum (strain California kid / ATCC 27343 / NCTC 10154).